We begin with the raw amino-acid sequence, 192 residues long: Vascular endothelial growth factor A (192 aa).

The first 26 residues, 1 to 26 (MNFLLSWIHWGLAALLYFHNAKVLQA), serve as a signal peptide directing secretion. Disulfide bonds link cysteine 52-cysteine 94, cysteine 83-cysteine 128, and cysteine 87-cysteine 130. N-linked (GlcNAc...) asparagine glycosylation is present at asparagine 101.

It belongs to the PDGF/VEGF growth factor family. Homodimer; disulfide-linked. Also found as heterodimer with PGF Interacts with FLT1/VEGFR1 and KDR/VEGFR2 receptors, heparan sulfate and heparin. Expressed by the venom gland, and probably other tissues.

Its subcellular location is the secreted. In terms of biological role, growth factor active in angiogenesis, vasculogenesis and endothelial cell growth. Induces endothelial cell proliferation, promotes cell migration, inhibits apoptosis and induces permeabilization of blood vessels. This Vipera ammodytes ammodytes (Western sand viper) protein is Vascular endothelial growth factor A.